The following is a 461-amino-acid chain: MGIPMQIYQDGKGVQFYHTRYQNVFDERASKYGNYTVNNDYPQLPDTIKEHIDQLTFSNVGEDGGDVGNYSEEDDDGDEEKELEDVFRSNRGLEFVRINNYFTTHDLQSFKSFRNFNSKYWIFYSNQAEDKKLLLYDFNGQHLIFIKQQFYGQLNLLLSDAIICMDCNFGYNSNTIQILVGFQNGKLLKLNCDLNGNVNNHLLLKDPSTSSHQSHLSILNVWAGLLPHFVVSFSLKDGLLITSLDHQQSNGSFQSFHTNIDLPVDLRTTTNVKSVLNFPQFTLYKGNDMIFHCKNLLGSDASTLNKEINFMLKIDEDVQKIDYLLKTNHILLETNMRYLSIPTRDPIENSNSSPPVSDSEVYPIFYKTQELHVHASGTGRQIANNGKYIFITEQHLYGTALSVYKYSISFKRWLFVGYSDIRAKYGIRSVKDLFVGNCPSVNSPVLTILTDDNNIQTILLK.

Residues 58–80 (SNVGEDGGDVGNYSEEDDDGDEE) are disordered. The segment covering 71-80 (SEEDDDGDEE) has biased composition (acidic residues).

Its subcellular location is the cytoplasm. The protein resides in the nucleus. Its function is as follows. Involved in the regulation of anaerobiotic glycerol metabolism. The polypeptide is Protein YIG1 (YIG1) (Saccharomyces cerevisiae (strain ATCC 204508 / S288c) (Baker's yeast)).